The primary structure comprises 380 residues: Cytochrome b (380 aa).

4 helical membrane passes run Phe-34–Ala-54, Trp-78–Ile-99, Trp-114–Leu-134, and Phe-179–Thr-199. The heme b site is built by His-84 and His-98. The heme b site is built by His-183 and His-197. Residue His-202 participates in a ubiquinone binding. The next 4 helical transmembrane spans lie at Thr-227–Ser-247, Leu-289–His-309, Leu-321–Ser-341, and Phe-348–Pro-368.

Belongs to the cytochrome b family. In terms of assembly, the cytochrome bc1 complex contains 11 subunits: 3 respiratory subunits (MT-CYB, CYC1 and UQCRFS1), 2 core proteins (UQCRC1 and UQCRC2) and 6 low-molecular weight proteins (UQCRH/QCR6, UQCRB/QCR7, UQCRQ/QCR8, UQCR10/QCR9, UQCR11/QCR10 and a cleavage product of UQCRFS1). This cytochrome bc1 complex then forms a dimer. It depends on heme b as a cofactor.

It localises to the mitochondrion inner membrane. Component of the ubiquinol-cytochrome c reductase complex (complex III or cytochrome b-c1 complex) that is part of the mitochondrial respiratory chain. The b-c1 complex mediates electron transfer from ubiquinol to cytochrome c. Contributes to the generation of a proton gradient across the mitochondrial membrane that is then used for ATP synthesis. In Eudyptes chrysolophus (Macaroni penguin), this protein is Cytochrome b (MT-CYB).